A 1017-amino-acid polypeptide reads, in one-letter code: MVAKGRIIRVTGPLVVADGMKGAKMYEVVRVGELGLIGEIIRLEGDKAVIQVYEETAGVRPGEPVIGTGSSLSVELGPGLLTSIYDGIQRPLEVIREKTGDFIARGVTAPALPRDKKWHFIPKVKVGDKVVGGDIIGEVPETSIITHKIMVPPGIEGEIVEIAEEGEYTIEEVIAKVKTPSGEIKELKMYQRWPVRVKRPYKEKLPPEVPLITGQRVIDTFFPQAKGGTAAIPGPFGSGKCVDGDTLVLTKEFGLIKIKDLYKILDGKGKKTVNGNEEWTELERPITLYGYKDGKIVEIKATHVYKGFSAGMIEIRTRTGRKIKVTPIHKLFTGRVTKNGLEIREVMAKDLKKGDRIIVAKKIDGGERVKLNIRVEQKRGKKIRIPDVLDEKLAEFLGYLIADGTLKPRTVAIYNNDESLLRRANELANELFNIEGKIVKGRTVKALLIHSKALVEFFSKLGVPRNKKARTWKVPKELLISEPEVVKAFIKAYIMCDGYYDENKGEIEIVTASEEAAYGFSYLLAKLGIYAIIREKIIGDKVYYRVVISGESNLEKLGIERVGRGYTSYDIVPVEVEELYNALGRPYAELKRAGIEIHNYLSGENMSYEMFRKFAKFVGMEEIAENHLTHVLFDEIVEIRYISEGQEVYDVTTETHNFIGGNMPTLLHNTVTQHQLAKWSDAQVVIYIGCGERGNEMTDVLEEFPKLKDPKTGKPLMERTVLIANTSNMPVAAREASIYTGITIAEYFRDMGYDVALMADSTSRWAEALREISGRLEEMPGEEGYPAYLASKLAEFYERAGRVVTLGSDYRVGSVSVIGAVSPPGGDFSEPVVQNTLRVVKVFWALDADLARRRHFPAINWLTSYSLYVDAVKDWWHKNVDPEWKAMRDKAMELLQKESELQEIVRIVGPDALPERERAILLVARMLREDYLQQDAFDEVDTYCPPEKQVTMMRVLLNFYDKTMEAISRGVPLEEIAKLPVREEIGRMKFEPDVGKIKALIDKTNEQFEELFKKYGA.

In terms of domain architecture, DOD-type homing endonuclease spans 396–529 (FLGYLIADGT…FSYLLAKLGI (134 aa)).

Belongs to the ATPase alpha/beta chains family. In terms of assembly, has multiple subunits with at least A(3), B(3), C, D, E, F, H, I and proteolipid K(x). In terms of processing, this protein undergoes a protein self splicing that involves a post-translational excision of the VDE intervening region (intein) followed by peptide ligation.

Its subcellular location is the cell membrane. The catalysed reaction is ATP + H2O + 4 H(+)(in) = ADP + phosphate + 5 H(+)(out). In terms of biological role, component of the A-type ATP synthase that produces ATP from ADP in the presence of a proton gradient across the membrane. The A chain is the catalytic subunit. The chain is A-type ATP synthase subunit A from Pyrococcus abyssi (strain GE5 / Orsay).